Reading from the N-terminus, the 629-residue chain is Arginine--tRNA ligase (629 aa).

The 'HIGH' region motif lies at 128–138 (VNPTKPLHMGH).

Belongs to the class-I aminoacyl-tRNA synthetase family.

It localises to the cytoplasm. The catalysed reaction is tRNA(Arg) + L-arginine + ATP = L-arginyl-tRNA(Arg) + AMP + diphosphate. The sequence is that of Arginine--tRNA ligase (argS) from Pyrococcus horikoshii (strain ATCC 700860 / DSM 12428 / JCM 9974 / NBRC 100139 / OT-3).